The sequence spans 582 residues: Proline--tRNA ligase (582 aa).

Belongs to the class-II aminoacyl-tRNA synthetase family. ProS type 1 subfamily. Homodimer.

The protein localises to the cytoplasm. The enzyme catalyses tRNA(Pro) + L-proline + ATP = L-prolyl-tRNA(Pro) + AMP + diphosphate. Functionally, catalyzes the attachment of proline to tRNA(Pro) in a two-step reaction: proline is first activated by ATP to form Pro-AMP and then transferred to the acceptor end of tRNA(Pro). As ProRS can inadvertently accommodate and process non-cognate amino acids such as alanine and cysteine, to avoid such errors it has two additional distinct editing activities against alanine. One activity is designated as 'pretransfer' editing and involves the tRNA(Pro)-independent hydrolysis of activated Ala-AMP. The other activity is designated 'posttransfer' editing and involves deacylation of mischarged Ala-tRNA(Pro). The misacylated Cys-tRNA(Pro) is not edited by ProRS. The polypeptide is Proline--tRNA ligase (Mycobacterium tuberculosis (strain CDC 1551 / Oshkosh)).